A 145-amino-acid polypeptide reads, in one-letter code: Antiholin-like protein LrgA (145 aa).

The next 4 membrane-spanning stretches (helical) occupy residues 10-30 (PAHF…SKII), 33-53 (FMPI…VLLC), 72-92 (NIGL…GVIS), and 96-116 (FLII…TGYV).

It belongs to the CidA/LrgA family. LrgA subfamily.

It localises to the cell membrane. Inhibits the expression or activity of extracellular murein hydrolases by interacting, possibly with LrgB, with the holin-like proteins CidA and/or CidB. The LrgAB and CidAB proteins may affect the proton motive force of the membrane. May be involved in programmed cell death (PCD), possibly triggering PCD in response to antibiotics and environmental stresses. The sequence is that of Antiholin-like protein LrgA from Staphylococcus aureus (strain Mu3 / ATCC 700698).